Consider the following 657-residue polypeptide: Translation factor GUF1, mitochondrial (657 aa).

Residues M1–N39 constitute a mitochondrion transit peptide. One can recognise a tr-type G domain in the interval E59–V239. GTP contacts are provided by residues T109–S116, L173–E177, and L227–T230.

Belongs to the TRAFAC class translation factor GTPase superfamily. Classic translation factor GTPase family. LepA subfamily.

The protein localises to the mitochondrion inner membrane. It catalyses the reaction GTP + H2O = GDP + phosphate + H(+). Functionally, promotes mitochondrial protein synthesis. May act as a fidelity factor of the translation reaction, by catalyzing a one-codon backward translocation of tRNAs on improperly translocated ribosomes. Binds to mitochondrial ribosomes in a GTP-dependent manner. This Ajellomyces capsulatus (strain NAm1 / WU24) (Darling's disease fungus) protein is Translation factor GUF1, mitochondrial.